A 997-amino-acid chain; its full sequence is Protein Smaug (997 aa).

Over residues 1–37 (MKYATGTDNAMTSGISGQTNNSNSASTEMQPTTSTPT) the composition is skewed to polar residues. Disordered stretches follow at residues 1–69 (MKYA…QSQP) and 329–370 (LCPA…GSSS). 2 stretches are compositionally biased toward low complexity: residues 44-69 (TPTATTTATYANGNPNPNANPSQSQP) and 329-338 (LCPASGSRSS). Residues S564 and S575 each carry the phosphoserine modification. The interaction with cup stretch occupies residues 583-763 (EFKPNYIKFH…KDLKFKLSKM (181 aa)). Positions 600 to 654 (GIGLWLKSLRLHKYIELFKNMTYEEMLLITEDFLQSVGVTKGASHKLALCIEKLK) constitute an SAM domain. Disordered regions lie at residues 773 to 892 (HVKP…MQQM) and 944 to 972 (GSSDNLGLERNQQPQQQQRKLSGGVTSAE). Composition is skewed to polar residues over residues 802–822 (NGSNDRINNRKNSNDMLNFSL) and 854–864 (HQPQYKSSSYP). The residue at position 970 (S970) is a Phosphoserine.

Belongs to the SMAUG family. As to quaternary structure, interacts with oskar (osk). Binds to the 3'-UTR of nos. Interacts with cup, which in turn recruits eIF4-E, leading to an indirect interaction between smg and eIF4-E that prevents mRNA translation.

It is found in the cytoplasm. Its function is as follows. Translation regulator that binds to the 3'-UTR of specific mRNAs such as nanos (nos) and prevent their translation. Prevents translation of unlocalized nos in the bulk cytoplasm via the recruitment of cup. The protein is Protein Smaug of Drosophila erecta (Fruit fly).